The sequence spans 258 residues: Type III pantothenate kinase (258 aa).

6–13 (DVGNTNTV) is a binding site for ATP. Substrate contacts are provided by residues Y100 and 107–110 (GADR). D109 functions as the Proton acceptor in the catalytic mechanism. D129 contributes to the K(+) binding site. T132 provides a ligand contact to ATP. T184 is a substrate binding site.

The protein belongs to the type III pantothenate kinase family. In terms of assembly, homodimer. It depends on NH4(+) as a cofactor. The cofactor is K(+).

The protein resides in the cytoplasm. It catalyses the reaction (R)-pantothenate + ATP = (R)-4'-phosphopantothenate + ADP + H(+). It functions in the pathway cofactor biosynthesis; coenzyme A biosynthesis; CoA from (R)-pantothenate: step 1/5. In terms of biological role, catalyzes the phosphorylation of pantothenate (Pan), the first step in CoA biosynthesis. The sequence is that of Type III pantothenate kinase from Bacillus licheniformis (strain ATCC 14580 / DSM 13 / JCM 2505 / CCUG 7422 / NBRC 12200 / NCIMB 9375 / NCTC 10341 / NRRL NRS-1264 / Gibson 46).